The sequence spans 409 residues: 4-hydroxy-3-methylbut-2-en-1-yl diphosphate synthase (ferredoxin) (409 aa).

Residues 1 to 12 (MQTLDRPNAPTQ) show a composition bias toward polar residues. A disordered region spans residues 1 to 22 (MQTLDRPNAPTQQPYPEPVYPR). Positions 314, 317, 348, and 355 each coordinate [4Fe-4S] cluster.

Belongs to the IspG family. It depends on [4Fe-4S] cluster as a cofactor.

It catalyses the reaction (2E)-4-hydroxy-3-methylbut-2-enyl diphosphate + 2 oxidized [2Fe-2S]-[ferredoxin] + H2O = 2-C-methyl-D-erythritol 2,4-cyclic diphosphate + 2 reduced [2Fe-2S]-[ferredoxin] + H(+). The protein operates within isoprenoid biosynthesis; isopentenyl diphosphate biosynthesis via DXP pathway; isopentenyl diphosphate from 1-deoxy-D-xylulose 5-phosphate: step 5/6. Functionally, converts 2C-methyl-D-erythritol 2,4-cyclodiphosphate (ME-2,4cPP) into 1-hydroxy-2-methyl-2-(E)-butenyl 4-diphosphate. The polypeptide is 4-hydroxy-3-methylbut-2-en-1-yl diphosphate synthase (ferredoxin) (Synechococcus sp. (strain JA-2-3B'a(2-13)) (Cyanobacteria bacterium Yellowstone B-Prime)).